We begin with the raw amino-acid sequence, 185 residues long: Ribosome-recycling factor (185 aa).

The protein belongs to the RRF family.

It is found in the cytoplasm. In terms of biological role, responsible for the release of ribosomes from messenger RNA at the termination of protein biosynthesis. May increase the efficiency of translation by recycling ribosomes from one round of translation to another. This is Ribosome-recycling factor from Bacillus anthracis (strain CDC 684 / NRRL 3495).